The primary structure comprises 563 residues: PHD finger protein EHD3 (563 aa).

The tract at residues 1-46 is disordered; that stretch reads MGSQNRPPPPRKRQPPPPEDHLVTYKRRRSKETQPLPLMANGANSK. PHD-type zinc fingers lie at residues 296 to 348, 420 to 472, and 474 to 524; these read LCPC…CSFK, SNLC…CWYC, and SCLC…CKIR.

As to quaternary structure, interacts with TRX1. In terms of tissue distribution, expressed in shoot apical meristem and leaves.

The protein localises to the nucleus. In terms of biological role, probable transcription factor involved in the regulation of floral induction under long day (LD) conditions. Promotes photoperiodic flowering by repressing GHD7, a major floral repressor. Seems to function independently of HD1. The polypeptide is PHD finger protein EHD3 (Oryza sativa subsp. japonica (Rice)).